A 1338-amino-acid polypeptide reads, in one-letter code: Aldehyde oxidase (1338 aa).

The 88-residue stretch at 5 to 92 (SELLFYVNGR…GAAVTTVEGI (88 aa)) folds into the 2Fe-2S ferredoxin-type domain. 4 residues coordinate [2Fe-2S] cluster: Cys-44, Cys-49, Cys-52, and Cys-74. Gln-113 contributes to the Mo-molybdopterin binding site. [2Fe-2S] cluster is bound by residues Cys-114, Cys-117, Cys-149, and Cys-151. Cys-151 serves as a coordination point for Mo-molybdopterin. An FAD-binding PCMH-type domain is found at 236–421 (FGSERMMWFS…VSVNIPYSRK (186 aa)). Residues 264 to 271 (VIMGNTSV), Ala-345, Ser-354, His-358, Asp-367, and Leu-411 contribute to the FAD site. Mo-molybdopterin is bound by residues 806-807 (AF) and Met-1047. Ser-1068 bears the Phosphoserine mark. Mo-molybdopterin is bound by residues 1088-1091 (GSVV), Gln-1203, and Leu-1268. Residue Glu-1270 is the Proton acceptor; for azaheterocycle hydroxylase activity of the active site.

The protein belongs to the xanthine dehydrogenase family. In terms of assembly, homodimer. [2Fe-2S] cluster is required as a cofactor. The cofactor is FAD. Requires Mo-molybdopterin as cofactor. As to expression, abundant in liver, expressed in adipose tissue and at lower levels in lung, skeletal muscle, pancreas. In contrast to mice, no significant gender difference in AOX1 expression level (at protein level).

It is found in the cytoplasm. The catalysed reaction is an aldehyde + O2 + H2O = a carboxylate + H2O2 + H(+). It catalyses the reaction retinal + O2 + H2O = retinoate + H2O2 + H(+). Is very potently inhibited by raloxifene. Also inhibited by estradiol, ethinyl estradiol, hydralazine, menadione, isovanillin and thioridazine. Not inhibited by allopurinol, a xanthine dehydrogenase potent inhibitor. Functionally, oxidase with broad substrate specificity, oxidizing aromatic azaheterocycles, such as N1-methylnicotinamide, N-methylphthalazinium and phthalazine, as well as aldehydes, such as benzaldehyde, retinal, pyridoxal, and vanillin. Plays a key role in the metabolism of xenobiotics and drugs containing aromatic azaheterocyclic substituents. Participates in the bioactivation of prodrugs such as famciclovir, catalyzing the oxidation step from 6-deoxypenciclovir to penciclovir, which is a potent antiviral agent. Is probably involved in the regulation of reactive oxygen species homeostasis. May be a prominent source of superoxide generation via the one-electron reduction of molecular oxygen. May also catalyze nitric oxide (NO) production via the reduction of nitrite to NO with NADH or aldehyde as electron donor. May play a role in adipogenesis. In Homo sapiens (Human), this protein is Aldehyde oxidase.